Consider the following 380-residue polypeptide: Cytochrome b (380 aa).

4 helical membrane passes run 34 to 54 (FGSL…LLAT), 78 to 99 (WLIR…YLHI), 114 to 134 (WNTG…GYVL), and 179 to 199 (FFAL…IHLT). Residues H84 and H98 each contribute to the heme b site. The heme b site is built by H183 and H197. A ubiquinone is bound at residue H202. Helical transmembrane passes span 227-247 (LKDI…ALFS), 289-309 (LGGV…PLLH), 321-341 (LSQL…WVGS), and 348-368 (FIII…LLFP).

Belongs to the cytochrome b family. The cytochrome bc1 complex contains 11 subunits: 3 respiratory subunits (MT-CYB, CYC1 and UQCRFS1), 2 core proteins (UQCRC1 and UQCRC2) and 6 low-molecular weight proteins (UQCRH/QCR6, UQCRB/QCR7, UQCRQ/QCR8, UQCR10/QCR9, UQCR11/QCR10 and a cleavage product of UQCRFS1). This cytochrome bc1 complex then forms a dimer. It depends on heme b as a cofactor.

It localises to the mitochondrion inner membrane. In terms of biological role, component of the ubiquinol-cytochrome c reductase complex (complex III or cytochrome b-c1 complex) that is part of the mitochondrial respiratory chain. The b-c1 complex mediates electron transfer from ubiquinol to cytochrome c. Contributes to the generation of a proton gradient across the mitochondrial membrane that is then used for ATP synthesis. This is Cytochrome b (MT-CYB) from Uria lomvia (Thick-billed murre).